The chain runs to 728 residues: 1,4-alpha-glucan branching enzyme GlgB (728 aa).

Aspartate 405 acts as the Nucleophile in catalysis. Residue glutamate 458 is the Proton donor of the active site.

The protein belongs to the glycosyl hydrolase 13 family. GlgB subfamily. Monomer.

The catalysed reaction is Transfers a segment of a (1-&gt;4)-alpha-D-glucan chain to a primary hydroxy group in a similar glucan chain.. It functions in the pathway glycan biosynthesis; glycogen biosynthesis. Catalyzes the formation of the alpha-1,6-glucosidic linkages in glycogen by scission of a 1,4-alpha-linked oligosaccharide from growing alpha-1,4-glucan chains and the subsequent attachment of the oligosaccharide to the alpha-1,6 position. This chain is 1,4-alpha-glucan branching enzyme GlgB, found in Salmonella paratyphi A (strain ATCC 9150 / SARB42).